The following is a 314-amino-acid chain: Pantothenate synthetase (314 aa).

43–50 (MGALHEGH) serves as a coordination point for ATP. Residue His50 is the Proton donor of the active site. Gln75 serves as a coordination point for (R)-pantoate. Residue Gln75 participates in beta-alanine binding. Residues 112-131 (MYPDGTRTSVHPGPLGDDLE) are disordered. Residue 161 to 164 (GEKD) participates in ATP binding. Gln167 serves as a coordination point for (R)-pantoate. ATP-binding positions include Val190 and 198–201 (LSSR).

It belongs to the pantothenate synthetase family. In terms of assembly, homodimer.

It localises to the cytoplasm. The enzyme catalyses (R)-pantoate + beta-alanine + ATP = (R)-pantothenate + AMP + diphosphate + H(+). Its pathway is cofactor biosynthesis; (R)-pantothenate biosynthesis; (R)-pantothenate from (R)-pantoate and beta-alanine: step 1/1. Functionally, catalyzes the condensation of pantoate with beta-alanine in an ATP-dependent reaction via a pantoyl-adenylate intermediate. The chain is Pantothenate synthetase from Mycolicibacterium smegmatis (strain ATCC 700084 / mc(2)155) (Mycobacterium smegmatis).